The sequence spans 389 residues: Tryptophan synthase beta chain (389 aa).

K84 carries the post-translational modification N6-(pyridoxal phosphate)lysine.

Belongs to the TrpB family. In terms of assembly, tetramer of two alpha and two beta chains. Pyridoxal 5'-phosphate is required as a cofactor.

It carries out the reaction (1S,2R)-1-C-(indol-3-yl)glycerol 3-phosphate + L-serine = D-glyceraldehyde 3-phosphate + L-tryptophan + H2O. Its pathway is amino-acid biosynthesis; L-tryptophan biosynthesis; L-tryptophan from chorismate: step 5/5. Its function is as follows. The beta subunit is responsible for the synthesis of L-tryptophan from indole and L-serine. The protein is Tryptophan synthase beta chain of Methanococcus aeolicus (strain ATCC BAA-1280 / DSM 17508 / OCM 812 / Nankai-3).